The following is a 213-amino-acid chain: Large ribosomal subunit protein uL1 (213 aa).

The protein belongs to the universal ribosomal protein uL1 family. As to quaternary structure, part of the 50S ribosomal subunit.

In terms of biological role, binds directly to 23S rRNA. Probably involved in E site tRNA release. Functionally, protein L1 is also a translational repressor protein, it controls the translation of its operon by binding to its mRNA. This chain is Large ribosomal subunit protein uL1, found in Methanocella arvoryzae (strain DSM 22066 / NBRC 105507 / MRE50).